Here is a 669-residue protein sequence, read N- to C-terminus: Cell surface receptor daf-1 (669 aa).

An N-terminal signal peptide occupies residues 1-19; that stretch reads MRIRHVVFCLLALVYGAET. Residues 20-170 lie on the Extracellular side of the membrane; it reads SDDDLDERTN…APGPQQSSTW (151 aa). N-linked (GlcNAc...) asparagine glycans are attached at residues Asn49, Asn79, Asn133, and Asn154. A helical transmembrane segment spans residues 171–191; it reads LILTILALLTFIVLLGIAIFL. Over 192–669 the chain is Cytoplasmic; it reads TRKSWEAKFD…NDDSSRPLLG (478 aa). In terms of domain architecture, GS spans 262–292; sequence NNMKDMLDVLEETSGSGMGPTTLHKLTIGGQ. In terms of domain architecture, Protein kinase spans 293–593; that stretch reads IRLTGRVGSG…KRMDERQQLL (301 aa). ATP is bound by residues 299–307 and Lys320; that span reads VGSGRFGNV. Asp423 acts as the Proton acceptor in catalysis. Basic and acidic residues-rich tracts occupy residues 611-624 and 633-650; these read DRKI…KDES and VQKE…RETA. The interval 611 to 669 is disordered; that stretch reads DRKILGPQKPKDESPANGAPRIVQKEIDREDEQENWRETAKTPNGHISSNDDSSRPLLG. Positions 651–661 are enriched in polar residues; sequence KTPNGHISSND.

Belongs to the protein kinase superfamily. TKL Ser/Thr protein kinase family. TGFB receptor subfamily. May interact with daf-4 to regulate dauer larva development. In terms of tissue distribution, head and ventral nerve cord from embryos to adults. Expressed in many sensory neurons. Subset of head neurons show coexpression with daf-4 when dauer/nondauer decision is made. Also expressed in non-neuronal cells: membraneous sheath surrounding the distal end of the intestine and in the distal tip cell of the gonad.

It is found in the membrane. It catalyses the reaction L-threonyl-[receptor-protein] + ATP = O-phospho-L-threonyl-[receptor-protein] + ADP + H(+). It carries out the reaction L-seryl-[receptor-protein] + ATP = O-phospho-L-seryl-[receptor-protein] + ADP + H(+). Functionally, probably involved in a TGF-beta pathway. May be a receptor for TGF-beta-like ligand daf-7. Controls the decision of whether or not larvae enter a developmentally arrested state, known as dauer, in response to environmental conditions. Involved in regulating entry into quiescence triggered by satiety. Involved in sensitivity to CO2 levels. In AWC neurons, acts to promote expression of srsx-3, a member of the GPCR family. This is Cell surface receptor daf-1 (daf-1) from Caenorhabditis elegans.